The chain runs to 125 residues: Mesotocin-neurophysin MT (125 aa).

Positions 1–19 (MSYTALAVTFFGWLALSSA) are cleaved as a signal peptide. Cys20 and Cys25 are joined by a disulfide. Gly28 is subject to Glycine amide. Intrachain disulfides connect Cys42/Cys86, Cys45/Cys59, Cys53/Cys76, Cys60/Cys66, Cys93/Cys106, Cys100/Cys118, and Cys107/Cys112.

This sequence belongs to the vasopressin/oxytocin family. As to expression, mesotocin is produced by magnocellular preoptic neurons in the hypothalamus in amphibians, reptiles and birds.

The protein resides in the secreted. Mesotocin is a diuretic hormone. The sequence is that of Mesotocin-neurophysin MT from Bufo japonicus (Japanese common toad).